Reading from the N-terminus, the 338-residue chain is MYG1 protein YER156C (338 aa).

The protein belongs to the MYG1 family.

In Saccharomyces cerevisiae (strain ATCC 204508 / S288c) (Baker's yeast), this protein is MYG1 protein YER156C.